We begin with the raw amino-acid sequence, 640 residues long: MYEVKLKVELEDKVLEVTQGTTPYDILCDYFKDRKDVISCRIDGVYSDMSSEILKDCKLELMTFEDDGARDIFWHSSAHVLGNALVNLYPDAKLVHGPPIEEGFFYDVDVTDPISSEDYEKIEEEMVKIMKKNYRFERVIKSKEELLEAYRDNPCKTHFIMKGVDKESSVYRNGDFFDMCLGPHIRSTGVIKAVKVLKNSSAYFLNDPNLKSLQRIYAITFPSKGMMDEYLKRKEEAKERDHRKIGTELDLFFFSKYSPGSCFFLPNGTTMYNTLIEFLREEYRKRGFKEVITPNIFCTQLWEESGHLQNYKENMFIIEGDTFALKPMNCPGHCVMFRHQDHSFRDLPLRLADFGVLHRNELSGTLTGLTRVRRFQQDDAHIFCTKDQVKEEIKGCLEFLSFVYGVFGFRFELVLSTRPEKYLGSVDEWDRAEKALADAMDESNMPFKINAGDGAFYGPKIDITLHDALGRRIQCATIQLDFQLPQRFELKYRDSDGQCRTPVIIHRAILGSIERMIAIILESFGKRLPFWISPRQIAIVNMGNPDYVGKVRSVLARFRLDVIDDGNTLSKRIRTAETSGYALVCVVGKKEAEANEINIRFNKSNRNIGLYELRDILDRMADEKVELDSILPIDKVSISK.

The TGS domain occupies 1–63; the sequence is MYEVKLKVEL…LKDCKLELMT (63 aa).

It belongs to the class-II aminoacyl-tRNA synthetase family.

The protein localises to the cytoplasm. The enzyme catalyses tRNA(Thr) + L-threonine + ATP = L-threonyl-tRNA(Thr) + AMP + diphosphate + H(+). The sequence is that of Probable threonine--tRNA ligase, cytoplasmic from Encephalitozoon cuniculi (strain GB-M1) (Microsporidian parasite).